We begin with the raw amino-acid sequence, 246 residues long: Ribonuclease 3 (246 aa).

The region spanning 10-143 (LERLEQALDY…LLGAIYLDGG (134 aa)) is the RNase III domain. E56 is a binding site for Mg(2+). Residue D60 is part of the active site. N129 and E132 together coordinate Mg(2+). Residue E132 is part of the active site. Residues 170–239 (DYKTLLQEYL…AQQALELLIE (70 aa)) form the DRBM domain.

It belongs to the ribonuclease III family. Homodimer. Requires Mg(2+) as cofactor.

The protein localises to the cytoplasm. The enzyme catalyses Endonucleolytic cleavage to 5'-phosphomonoester.. Digests double-stranded RNA. Involved in the processing of primary rRNA transcript to yield the immediate precursors to the large and small rRNAs (23S and 16S). Processes some mRNAs, and tRNAs when they are encoded in the rRNA operon. Processes pre-crRNA and tracrRNA of type II CRISPR loci if present in the organism. The sequence is that of Ribonuclease 3 from Magnetococcus marinus (strain ATCC BAA-1437 / JCM 17883 / MC-1).